An 87-amino-acid polypeptide reads, in one-letter code: Small ribosomal subunit protein uS15 (87 aa).

Positions 1–19 (MEKARKEQLIREYATHEGD) are enriched in basic and acidic residues. Residues 1–22 (MEKARKEQLIREYATHEGDTGS) form a disordered region.

It belongs to the universal ribosomal protein uS15 family. Part of the 30S ribosomal subunit. Forms a bridge to the 50S subunit in the 70S ribosome, contacting the 23S rRNA.

In terms of biological role, one of the primary rRNA binding proteins, it binds directly to 16S rRNA where it helps nucleate assembly of the platform of the 30S subunit by binding and bridging several RNA helices of the 16S rRNA. Forms an intersubunit bridge (bridge B4) with the 23S rRNA of the 50S subunit in the ribosome. This is Small ribosomal subunit protein uS15 from Clostridium novyi (strain NT).